We begin with the raw amino-acid sequence, 63 residues long: Large ribosomal subunit protein bL28 (63 aa).

The protein belongs to the bacterial ribosomal protein bL28 family.

This Coprothermobacter proteolyticus (strain ATCC 35245 / DSM 5265 / OCM 4 / BT) protein is Large ribosomal subunit protein bL28.